Reading from the N-terminus, the 405-residue chain is 3-hydroxy-3-methylglutaryl-coenzyme A reductase (405 aa).

Residues Glu101 and Asp305 each act as charge relay system in the active site. Residue His400 is the Proton donor of the active site.

Belongs to the HMG-CoA reductase family. As to quaternary structure, homodimer.

It localises to the cytoplasm. The enzyme catalyses (R)-mevalonate + 2 NADP(+) + CoA = (3S)-3-hydroxy-3-methylglutaryl-CoA + 2 NADPH + 2 H(+). Its pathway is metabolic intermediate biosynthesis; (R)-mevalonate biosynthesis; (R)-mevalonate from acetyl-CoA: step 3/3. With respect to regulation, is competitively inhibited by lovastatin (formerly called mevinolin). Lovastatin also blocks the growth of H.salinarum, and this effect is reversed by addition of mevalonate, indicating the critical role that the mevalonate pathway plays in isoprenoid biosynthesis by these archaea. Catalyzes the NADPH-dependent reductive deacylation of (S)-3-hydroxy-3-methylglutaryl-CoA (HMG-CoA) to (R)-mevalonate. Cannot use NADH instead of NADPH. Functions in the mevalonate (MVA) pathway leading to isopentenyl diphosphate (IPP), a key precursor for the biosynthesis of isoprenoid compounds such as archaeal membrane lipids. This chain is 3-hydroxy-3-methylglutaryl-coenzyme A reductase (hmgA), found in Halobacterium salinarum (strain ATCC 29341 / DSM 671 / R1).